Consider the following 599-residue polypeptide: UvrABC system protein C (599 aa).

Positions asparagine 13–valine 91 constitute a GIY-YIG domain. A UVR domain is found at glutamine 200 to valine 235.

Belongs to the UvrC family. As to quaternary structure, interacts with UvrB in an incision complex.

Its subcellular location is the cytoplasm. In terms of biological role, the UvrABC repair system catalyzes the recognition and processing of DNA lesions. UvrC both incises the 5' and 3' sides of the lesion. The N-terminal half is responsible for the 3' incision and the C-terminal half is responsible for the 5' incision. The sequence is that of UvrABC system protein C from Methylobacillus flagellatus (strain ATCC 51484 / DSM 6875 / VKM B-1610 / KT).